A 535-amino-acid chain; its full sequence is MALAFDEYGRPFIILREQEKKSRLQGLDAHKANIAAAKAIARILRTSLGPKGMDKMLQSPDGDVTITNDGATILELMDVDNQIAKLLVELSRSQDYDIGDGTTGVVVMAGALLEQAEKLLERGIHPIRVAEGYEMASRIAVDHLESISTKYEFSATDIEPLVQTCMTTLSSKIVSRCKRALAEISVKAVLAVADLERKDVNLDLIKVEGKVGGKLEDTELVEGIIVDKDMSHPQMPKRIYDAHIAILTCPFEPPKPKTKHKVDIDTVEKFQTLRGQEQKYFDEMVQKCKDVGATLVICQWGFDDEANHLLMQRELPAVRWVGGVELELIAIATGGRIVPRFQELSTEKLGKAGLVREKSFGTTKDRMLYIEKCANSKAVTIFIRGGNKMMIEETKRSIHDALCVARNLIINNSIVYGGGSAEISCSIAVEAAADRHPGVEQYAIRAFADALDAIPLALAENSGLPPIDTLTVVKSQHVKENNSRCGIDCNDVGTNDMKEQNVFETLIGKQQQILLATQVVKMILKIDDVITPSEY.

The protein belongs to the TCP-1 chaperonin family. In terms of assembly, heterooligomeric complex of about 850 to 900 kDa that forms two stacked rings, 12 to 16 nm in diameter.

The protein resides in the cytoplasm. Molecular chaperone; assists the folding of proteins upon ATP hydrolysis. Known to play a role, in vitro, in the folding of actin and tubulin. The polypeptide is T-complex protein 1 subunit epsilon (Avena sativa (Oat)).